The chain runs to 788 residues: Endonuclease MutS2 (788 aa).

332–339 is a binding site for ATP; that stretch reads GPNTGGKT. The Smr domain occupies 713 to 788; it reads VDLRGMDAEE…GTGVTVVELK (76 aa).

It belongs to the DNA mismatch repair MutS family. MutS2 subfamily. As to quaternary structure, homodimer. Binds to stalled ribosomes, contacting rRNA.

In terms of biological role, endonuclease that is involved in the suppression of homologous recombination and thus may have a key role in the control of bacterial genetic diversity. Its function is as follows. Acts as a ribosome collision sensor, splitting the ribosome into its 2 subunits. Detects stalled/collided 70S ribosomes which it binds and splits by an ATP-hydrolysis driven conformational change. Acts upstream of the ribosome quality control system (RQC), a ribosome-associated complex that mediates the extraction of incompletely synthesized nascent chains from stalled ribosomes and their subsequent degradation. Probably generates substrates for RQC. This Clostridium botulinum (strain Langeland / NCTC 10281 / Type F) protein is Endonuclease MutS2.